A 188-amino-acid chain; its full sequence is Putative manganese efflux pump MntP (188 aa).

6 helical membrane-spanning segments follow: residues L3 to A23, I35 to V55, W70 to G90, W104 to F126, M140 to F160, and A167 to I187.

It belongs to the MntP (TC 9.B.29) family.

It is found in the cell inner membrane. Probably functions as a manganese efflux pump. This Neisseria meningitidis serogroup C / serotype 2a (strain ATCC 700532 / DSM 15464 / FAM18) protein is Putative manganese efflux pump MntP.